Here is a 362-residue protein sequence, read N- to C-terminus: Alpha-tubulin N-acetyltransferase (362 aa).

An N-acetyltransferase domain is found at methionine 1 to isoleucine 177. Acetyl-CoA contacts are provided by residues phenylalanine 111–threonine 124 and serine 147–lysine 156.

Belongs to the acetyltransferase ATAT1 family.

The enzyme catalyses L-lysyl-[alpha-tubulin] + acetyl-CoA = N(6)-acetyl-L-lysyl-[alpha-tubulin] + CoA + H(+). Specifically acetylates 'Lys-40' in alpha-tubulin on the lumenal side of microtubules. Promotes microtubule destabilization and accelerates microtubule dynamics; this activity may be independent of acetylation activity. Acetylates alpha-tubulin with a slow enzymatic rate, due to a catalytic site that is not optimized for acetyl transfer. Enters the microtubule through each end and diffuses quickly throughout the lumen of microtubules. Acetylates only long/old microtubules because of its slow acetylation rate since it does not have time to act on dynamically unstable microtubules before the enzyme is released. This is Alpha-tubulin N-acetyltransferase from Giardia intestinalis (strain ATCC 50803 / WB clone C6) (Giardia lamblia).